The following is a 787-amino-acid chain: Integrin beta-6 (787 aa).

Residues 1–21 (MGIELVCLFLLLLGRNDHVQG) form the signal peptide. The PSI domain occupies 22 to 71 (GCAWGGAESCSDCLLTGPHCAWCSQENFTHLSGAGERCDTPANLLAKGCQ). Residues 22–708 (GCAWGGAESC…KDCPKPPNIP (687 aa)) lie on the Extracellular side of the membrane. 19 disulfides stabilise this stretch: cysteine 23-cysteine 41, cysteine 31-cysteine 454, cysteine 34-cysteine 59, cysteine 44-cysteine 70, cysteine 197-cysteine 204, cysteine 252-cysteine 293, cysteine 394-cysteine 406, cysteine 426-cysteine 452, cysteine 456-cysteine 476, cysteine 467-cysteine 479, cysteine 481-cysteine 490, cysteine 492-cysteine 519, cysteine 502-cysteine 517, cysteine 511-cysteine 522, cysteine 524-cysteine 537, cysteine 539-cysteine 560, cysteine 544-cysteine 558, cysteine 552-cysteine 563, and cysteine 565-cysteine 574. Residues asparagine 48 and asparagine 97 are each glycosylated (N-linked (GlcNAc...) asparagine). The VWFA domain maps to 131-371 (YPVDLYYLMD…QLIISAYEEL (241 aa)). 3 residues coordinate Mg(2+): aspartate 140, serine 142, and serine 144. Ca(2+) contacts are provided by serine 144, aspartate 147, aspartate 148, and glutamate 179. Ca(2+) is bound by residues asparagine 235, aspartate 237, proline 239, and glutamate 240. A Mg(2+)-binding site is contributed by glutamate 240. A glycan (N-linked (GlcNAc...) asparagine) is linked at asparagine 260. 2 residues coordinate Ca(2+): aspartate 271 and lysine 355. Asparagine 387 carries an N-linked (GlcNAc...) asparagine glycan. A glycan (N-linked (GlcNAc...) asparagine) is linked at asparagine 418. I-EGF domains follow at residues 456 to 491 (CQREIETNSSKCHNGNGSFQCGVCTCNPGHMGPHCE), 492 to 538 (CGED…PYCQ), 539 to 575 (CDNFSCLRHKGLLCGDNGDCDCGECVCRDGWTGEYCN), and 576 to 615 (CTTNRDSCTSEDGVLCSGRGDCVCGKCVCRNPGASGPTCE). N-linked (GlcNAc...) asparagine glycosylation is found at asparagine 463 and asparagine 471. Asparagine 541 carries an N-linked (GlcNAc...) asparagine glycan. N-linked (GlcNAc...) asparagine glycosylation is present at asparagine 575. 9 disulfides stabilise this stretch: cysteine 576–cysteine 599, cysteine 583–cysteine 597, cysteine 591–cysteine 602, cysteine 604–cysteine 614, cysteine 617–cysteine 620, cysteine 624–cysteine 669, cysteine 630–cysteine 649, cysteine 633–cysteine 645, and cysteine 677–cysteine 701. Residues 709-729 (MIMLGVSLAILLIGVVLLCIW) form a helical membrane-spanning segment. Residues 730-757 (KLLVSFHDRKEVAKFEAERSKAKWQTGT) form an interaction with HAX1 region. Residues 730 to 787 (KLLVSFHDRKEVAKFEAERSKAKWQTGTNPLYRGSTSTFKNVTYKHREKHKAGLSSDG) are Cytoplasmic-facing.

Belongs to the integrin beta chain family. In terms of assembly, heterodimer of an alpha and a beta subunit. Interacts with FLNB. Interacts with HAX1. ITGAV:ITGB6 interacts with FBN1. ITGAV:ITGB6 interacts with TGFB1.

It is found in the cell membrane. Its subcellular location is the cell junction. The protein localises to the focal adhesion. Integrin alpha-V:beta-6 (ITGAV:ITGB6) is a receptor for fibronectin and cytotactin. It recognizes the sequence R-G-D in its ligands. ITGAV:ITGB6 acts as a receptor for fibrillin-1 (FBN1) and mediates R-G-D-dependent cell adhesion to FBN1. Integrin alpha-V:beta-6 (ITGAV:ITGB6) mediates R-G-D-dependent release of transforming growth factor beta-1 (TGF-beta-1) from regulatory Latency-associated peptide (LAP), thereby playing a key role in TGF-beta-1 activation. In Mus musculus (Mouse), this protein is Integrin beta-6 (Itgb6).